The sequence spans 122 residues: uncharacterized protein (122 aa).

Over 1 to 24 the chain is Cytoplasmic; sequence MKNRKFSNLLLLRLRILCFNKKPA. The chain crosses the membrane as a helical span at residues 25–45; the sequence is FAATSYAFFFRNFSVLIFIMV. The Extracellular segment spans residues 46–57; the sequence is PDEKENGAAADN. Residues 58–78 form a helical membrane-spanning segment; it reads SFSLLIGRGVVLFLFYCPTAL. The Cytoplasmic segment spans residues 79–122; that stretch reads KMHGPVPAHWFCDKNIEAIQSDGQIRLLRSGPFPWSHGTCIRGA.

Its subcellular location is the membrane. This is an uncharacterized protein from Saccharomyces cerevisiae (strain ATCC 204508 / S288c) (Baker's yeast).